A 29-amino-acid chain; its full sequence is NADH dehydrogenase [ubiquinone] 1 beta subcomplex subunit 10 (29 aa).

Residues 1 to 29 (GRKKGVQFDEGAPDDFDPNNPYKKDVAFL) are disordered.

This sequence belongs to the complex I NDUFB10 subunit family. As to quaternary structure, complex I is composed of about 45 different subunits.

The protein localises to the mitochondrion inner membrane. Its function is as follows. Accessory subunit of the mitochondrial membrane respiratory chain NADH dehydrogenase (Complex I), that is believed not to be involved in catalysis. Complex I functions in the transfer of electrons from NADH to the respiratory chain. The immediate electron acceptor for the enzyme is believed to be ubiquinone. The protein is NADH dehydrogenase [ubiquinone] 1 beta subcomplex subunit 10 of Solanum tuberosum (Potato).